Consider the following 102-residue polypeptide: Putative pterin-4-alpha-carbinolamine dehydratase (102 aa).

This sequence belongs to the pterin-4-alpha-carbinolamine dehydratase family.

The catalysed reaction is (4aS,6R)-4a-hydroxy-L-erythro-5,6,7,8-tetrahydrobiopterin = (6R)-L-erythro-6,7-dihydrobiopterin + H2O. In Burkholderia orbicola (strain MC0-3), this protein is Putative pterin-4-alpha-carbinolamine dehydratase.